Here is a 173-residue protein sequence, read N- to C-terminus: Mediator of RNA polymerase II transcription subunit 10 (173 aa).

The span at 1–10 (MVQQQQQSQQ) shows a compositional bias: low complexity. Residues 1 to 42 (MVQQQQQSQQRMMELHERNDREKLARKTEKEREEERRKQEDD) form a disordered region. Residues 13 to 42 (MELHERNDREKLARKTEKEREEERRKQEDD) show a composition bias toward basic and acidic residues.

Belongs to the Mediator complex subunit 10 family. As to quaternary structure, component of the Mediator complex.

The protein localises to the nucleus. Component of the Mediator complex, a coactivator involved in the regulated transcription of nearly all RNA polymerase II-dependent genes. Mediator functions as a bridge to convey information from gene-specific regulatory proteins to the basal RNA polymerase II transcription machinery. Mediator is recruited to promoters by direct interactions with regulatory proteins and serves as a scaffold for the assembly of a functional preinitiation complex with RNA polymerase II and the general transcription factors. Required for germ cell development and for transcriptional activation of certain stage-specific inducible promoters. This is Mediator of RNA polymerase II transcription subunit 10 (mdt-10) from Caenorhabditis elegans.